The sequence spans 540 residues: Peptide chain release factor 3 (540 aa).

A tr-type G domain is found at 14–283 (ELRRNFAIIS…YFLNYALKPG (270 aa)). GTP contacts are provided by residues 23–30 (SHPDAGKT), 91–95 (DTPGH), and 145–148 (NKLD).

Belongs to the TRAFAC class translation factor GTPase superfamily. Classic translation factor GTPase family. PrfC subfamily.

It localises to the cytoplasm. In terms of biological role, increases the formation of ribosomal termination complexes and stimulates activities of RF-1 and RF-2. It binds guanine nucleotides and has strong preference for UGA stop codons. It may interact directly with the ribosome. The stimulation of RF-1 and RF-2 is significantly reduced by GTP and GDP, but not by GMP. In Trichormus variabilis (strain ATCC 29413 / PCC 7937) (Anabaena variabilis), this protein is Peptide chain release factor 3.